Consider the following 1079-residue polypeptide: Alpha-mannosidase C (1079 aa).

The N-terminal stretch at 1–22 is a signal peptide; sequence MFYKTFGFLFIYLIILISGTLS. Zn(2+) is bound by residues His-44 and Asp-46. N-linked (GlcNAc...) asparagine glycosylation is found at Asn-60 and Asn-96. A Zn(2+)-binding site is contributed by Asp-158. Catalysis depends on Asp-158, which acts as the Nucleophile. Residues Asn-192, Asn-222, Asn-248, and Asn-467 are each glycosylated (N-linked (GlcNAc...) asparagine). His-475 provides a ligand contact to Zn(2+). N-linked (GlcNAc...) asparagine glycosylation is found at Asn-516, Asn-527, Asn-589, Asn-760, Asn-769, Asn-848, Asn-872, Asn-912, Asn-1040, and Asn-1057.

It belongs to the glycosyl hydrolase 38 family. It depends on Zn(2+) as a cofactor.

The protein localises to the secreted. The enzyme catalyses Hydrolysis of terminal, non-reducing alpha-D-mannose residues in alpha-D-mannosides.. In Dictyostelium discoideum (Social amoeba), this protein is Alpha-mannosidase C (manC).